The following is a 1191-amino-acid chain: Roquin-2 (1191 aa).

Positions 14, 17, 33, 35, 38, 50, and 53 each coordinate Zn(2+). The RING-type; degenerate zinc finger occupies 14–54; that stretch reads CPICYNEFDENVHKPISLGCSHTVCKTCLNKLHRKACPFDQ. The HEPN-N stretch occupies residues 91–170; the sequence is ENKHYEVAKK…RTVTELILQH (80 aa). The segment at 171–325 is ROQ; the sequence is QNPQQLSANL…SIIDKLQSPE (155 aa). The HEPN-C stretch occupies residues 326–396; the sequence is SFAKSVQELT…GLVDFIQNYS (71 aa). Residues 410 to 438 form a C3H1-type zinc finger; the sequence is KYKTSMCRDLRQQGGCPRGTNCTFAHSQE. Disordered regions lie at residues 528–576 and 644–680; these read GANG…NSVP and ESSLPPASMPYADHYSTFSPRDRMNSSPYQPPPPQPY. Polar residues predominate over residues 530–546; sequence NGQNAAGPSADSVTENK. Serine 549 carries the phosphoserine modification. Polar residues predominate over residues 554-576; the sequence is PVSNVAATSAGPSNVGTELNSVP. Serine 808, serine 983, and serine 1119 each carry phosphoserine.

In terms of assembly, interacts with EDC4. Interacts with CCR4-NOT deadenylase complex. Interacts with MAP3K5; the interaction is probably stimulus-dependent. In terms of processing, proteolytically cleaved after Arg-509 and Arg-585 by MALT1 in activated CD4(+) T cells; cleavage at Arg-509 and Arg-585 is critical for promoting RC3H1 degradation in response to T-cell receptor (TCR) stimulation, and hence is necessary for prolonging the stability of a set of mRNAs controlling Th17 cell differentiation. In terms of tissue distribution, expressed in spleen, testis, ovary and small intestine.

It localises to the cytoplasm. The protein localises to the P-body. The catalysed reaction is S-ubiquitinyl-[E2 ubiquitin-conjugating enzyme]-L-cysteine + [acceptor protein]-L-lysine = [E2 ubiquitin-conjugating enzyme]-L-cysteine + N(6)-ubiquitinyl-[acceptor protein]-L-lysine.. The protein operates within protein modification; protein ubiquitination. Its activity is regulated as follows. Binding to dsRNA, but not CDE RNA, crosstalks with the E3 ubiquitin ligase activity and may inhibit ubiquitination. Post-transcriptional repressor of mRNAs containing a conserved stem loop motif, called constitutive decay element (CDE), which is often located in the 3'-UTR, as in HMGXB3, ICOS, IER3, NFKBID, NFKBIZ, PPP1R10, TNF and in many more mRNAs. Binds to CDE and promotes mRNA deadenylation and degradation. This process does not involve miRNAs. In follicular helper T (Tfh) cells, represses of ICOS and TNFRSF4 expression, thus preventing spontaneous Tfh cell differentiation, germinal center B-cell differentiation in the absence of immunization and autoimmunity. In resting or LPS-stimulated macrophages, controls inflammation by suppressing TNF expression. Also recognizes CDE in its own mRNA and in that of paralogous RC3H1, possibly leading to feedback loop regulation. miRNA-binding protein that regulates microRNA homeostasis. Enhances DICER-mediated processing of pre-MIR146a but reduces mature MIR146a levels through an increase of 3' end uridylation. Both inhibits ICOS mRNA expression and they may act together to exert the suppression. Acts as a ubiquitin E3 ligase. Pairs with E2 enzymes UBE2B, UBE2D2, UBE2E2, UBE2E3, UBE2G2, UBE2K and UBE2Q2 and produces polyubiquitin chains. Shows the strongest activity when paired with UBE2N:UBE2V1 or UBE2N:UBE2V2 E2 complexes and generate both short and long polyubiquitin chains. Involved in the ubiquitination of MAP3K5. Able to interact with double-stranded RNA (dsRNA). The protein is Roquin-2 (RC3H2) of Homo sapiens (Human).